We begin with the raw amino-acid sequence, 224 residues long: V-type ATP synthase subunit D (224 aa).

A disordered region spans residues 190-224 (REAGYTQKKIKAKIEGKNKEAREAAAATSHGSAAD). Residues 201-212 (AKIEGKNKEARE) show a composition bias toward basic and acidic residues. Low complexity predominate over residues 213 to 224 (AAAATSHGSAAD).

Belongs to the V-ATPase D subunit family.

Its function is as follows. Produces ATP from ADP in the presence of a proton gradient across the membrane. The protein is V-type ATP synthase subunit D (atpD) of Deinococcus radiodurans (strain ATCC 13939 / DSM 20539 / JCM 16871 / CCUG 27074 / LMG 4051 / NBRC 15346 / NCIMB 9279 / VKM B-1422 / R1).